The sequence spans 83 residues: Exodeoxyribonuclease 7 small subunit (83 aa).

Residues 1–25 (MQDELFETEKAPPKNAKNAPKKSFE) are disordered.

The protein belongs to the XseB family. Heterooligomer composed of large and small subunits.

It localises to the cytoplasm. It carries out the reaction Exonucleolytic cleavage in either 5'- to 3'- or 3'- to 5'-direction to yield nucleoside 5'-phosphates.. Functionally, bidirectionally degrades single-stranded DNA into large acid-insoluble oligonucleotides, which are then degraded further into small acid-soluble oligonucleotides. The protein is Exodeoxyribonuclease 7 small subunit of Helicobacter pylori (strain P12).